A 21-amino-acid polypeptide reads, in one-letter code: Alpha-fibrinogenase A1 (21 aa).

It belongs to the peptidase S1 family. Snake venom subfamily. Monomer. In terms of tissue distribution, expressed by the venom gland.

The protein localises to the secreted. Inhibited by PMSF, bovine aprotinin (APR), and soybean trypsin inhibitor (STI). Is not inhibited by EDTA, beta-mercaptoethanol, and high temperature (85 degrees Celsius). In terms of biological role, snake venom serine protease that completely cleaves fibrinogen Aalpha chain (FGA), partially cleaves Bbeta chain (FGB) and has no activity on gamma chain. Is more potent that A2 and A3 alpha-fibrinogenases. Very active within 5 minutes. This Crotalus atrox (Western diamondback rattlesnake) protein is Alpha-fibrinogenase A1.